We begin with the raw amino-acid sequence, 277 residues long: Small ribosomal subunit protein uS2 (277 aa).

The interval 1–78 is disordered; it reads MSENDEGTDA…PADEEPVLDE (78 aa).

This sequence belongs to the universal ribosomal protein uS2 family.

The polypeptide is Small ribosomal subunit protein uS2 (Natronomonas pharaonis (strain ATCC 35678 / DSM 2160 / CIP 103997 / JCM 8858 / NBRC 14720 / NCIMB 2260 / Gabara) (Halobacterium pharaonis)).